Reading from the N-terminus, the 82-residue chain is Cytochrome b559 subunit alpha (82 aa).

The helical transmembrane segment at 21–35 (VIHSITIPSLFIAGW) threads the bilayer. Residue His23 participates in heme binding.

The protein belongs to the PsbE/PsbF family. Heterodimer of an alpha subunit and a beta subunit. PSII is composed of 1 copy each of membrane proteins PsbA, PsbB, PsbC, PsbD, PsbE, PsbF, PsbH, PsbI, PsbJ, PsbK, PsbL, PsbM, PsbT, PsbX, PsbY, PsbZ, Psb30/Ycf12, at least 3 peripheral proteins of the oxygen-evolving complex and a large number of cofactors. It forms dimeric complexes. It depends on heme b as a cofactor.

It is found in the plastid. Its subcellular location is the chloroplast thylakoid membrane. Functionally, this b-type cytochrome is tightly associated with the reaction center of photosystem II (PSII). PSII is a light-driven water:plastoquinone oxidoreductase that uses light energy to abstract electrons from H(2)O, generating O(2) and a proton gradient subsequently used for ATP formation. It consists of a core antenna complex that captures photons, and an electron transfer chain that converts photonic excitation into a charge separation. The polypeptide is Cytochrome b559 subunit alpha (Stigeoclonium helveticum (Green alga)).